We begin with the raw amino-acid sequence, 850 residues long: PH domain-containing protein YHR131C (850 aa).

In terms of domain architecture, PH spans 194–306 (RIHSDLVHRS…MYLSIGISVS (113 aa)). Residues 324 to 338 (RRRRRRRRRRRRHTH) are compositionally biased toward basic residues. Disordered stretches follow at residues 324–348 (RRRRRRRRRRRRHTHRSESSMGSFS), 406–428 (SAASGESSDNSTLGSTRSLSGCS), 451–494 (SSRT…GVPV), 583–659 (EASI…TDDS), and 793–850 (TTKD…QITA). Over residues 406-416 (SAASGESSDNS) the composition is skewed to low complexity. The span at 417-428 (TLGSTRSLSGCS) shows a compositional bias: polar residues. The span at 479-489 (HHESSGGDHPE) shows a compositional bias: basic and acidic residues. Residues 605–619 (ESATDLSQSSRSLCL) show a composition bias toward polar residues. Acidic residues-rich tracts occupy residues 626-658 (INDDESATETDEDENDGETDEYAGDDTNDDTDD) and 799-850 (DHGE…QITA).

It is found in the cytoplasm. The polypeptide is PH domain-containing protein YHR131C (Saccharomyces cerevisiae (strain ATCC 204508 / S288c) (Baker's yeast)).